A 157-amino-acid polypeptide reads, in one-letter code: Dihydrofolate reductase type 15 (157 aa).

Positions Lys-2–Lys-156 constitute a DHFR domain.

Belongs to the dihydrofolate reductase family. In terms of assembly, homodimer.

It catalyses the reaction (6S)-5,6,7,8-tetrahydrofolate + NADP(+) = 7,8-dihydrofolate + NADPH + H(+). It participates in cofactor biosynthesis; tetrahydrofolate biosynthesis; 5,6,7,8-tetrahydrofolate from 7,8-dihydrofolate: step 1/1. Key enzyme in folate metabolism. Catalyzes an essential reaction for de novo glycine and purine synthesis, and for DNA precursor synthesis. The polypeptide is Dihydrofolate reductase type 15 (dhfrXV) (Escherichia coli).